Here is a 730-residue protein sequence, read N- to C-terminus: Patatin-like phospholipase domain-containing protein CIMG_04897 (730 aa).

Residues 1-11 are compositionally biased toward basic residues; that stretch reads MTANSSRRRLQ. A disordered region spans residues 1-26; that stretch reads MTANSSRRRLQMKSPRTDGDEKEEDY. The helical transmembrane segment at 97–117 threads the bilayer; that stretch reads WPFLLFVLSWIVFLGALYILT. A PNPLA domain is found at 281–472; the sequence is LCLSGGATLA…RTDIPLKALD (192 aa). The GXSXG motif lies at 312 to 316; sequence GTSGG. The active-site Nucleophile is Ser314. The active-site Proton acceptor is Asp459. Residues 667-730 are disordered; it reads GHFREAPTSH…QGQSSGTKIG (64 aa). Over residues 721-730 the composition is skewed to polar residues; it reads QGQSSGTKIG.

This sequence belongs to the PLPL family.

The protein localises to the membrane. Functionally, probable lipid hydrolase. This Coccidioides immitis (strain RS) (Valley fever fungus) protein is Patatin-like phospholipase domain-containing protein CIMG_04897.